The chain runs to 391 residues: D-alanine--D-alanine ligase (391 aa).

Residues 1–24 (MSSENLPQSPERAESPQAPRRKPR) are disordered. The region spanning 171–381 (KRVFLSFGLP…YPELVDRLIQ (211 aa)) is the ATP-grasp domain. 207–262 (AGEHGWPLFIKPARGGSSMGITKVDSVEGLDAAIEEARRHDPKFLVESLLRGREIE) contacts ATP. Mg(2+) is bound by residues D335, E348, and N350.

This sequence belongs to the D-alanine--D-alanine ligase family. The cofactor is Mg(2+). Mn(2+) serves as cofactor.

It is found in the cytoplasm. It carries out the reaction 2 D-alanine + ATP = D-alanyl-D-alanine + ADP + phosphate + H(+). It functions in the pathway cell wall biogenesis; peptidoglycan biosynthesis. Functionally, cell wall formation. The polypeptide is D-alanine--D-alanine ligase (Streptomyces griseus subsp. griseus (strain JCM 4626 / CBS 651.72 / NBRC 13350 / KCC S-0626 / ISP 5235)).